We begin with the raw amino-acid sequence, 161 residues long: ATP synthase subunit b 1 (161 aa).

Residues 5–25 (AETWVAVAFVLMVALFIYFGA) traverse the membrane as a helical segment.

It belongs to the ATPase B chain family. In terms of assembly, F-type ATPases have 2 components, F(1) - the catalytic core - and F(0) - the membrane proton channel. F(1) has five subunits: alpha(3), beta(3), gamma(1), delta(1), epsilon(1). F(0) has three main subunits: a(1), b(2) and c(10-14). The alpha and beta chains form an alternating ring which encloses part of the gamma chain. F(1) is attached to F(0) by a central stalk formed by the gamma and epsilon chains, while a peripheral stalk is formed by the delta and b chains.

It is found in the cell inner membrane. F(1)F(0) ATP synthase produces ATP from ADP in the presence of a proton or sodium gradient. F-type ATPases consist of two structural domains, F(1) containing the extramembraneous catalytic core and F(0) containing the membrane proton channel, linked together by a central stalk and a peripheral stalk. During catalysis, ATP synthesis in the catalytic domain of F(1) is coupled via a rotary mechanism of the central stalk subunits to proton translocation. In terms of biological role, component of the F(0) channel, it forms part of the peripheral stalk, linking F(1) to F(0). In Afipia carboxidovorans (strain ATCC 49405 / DSM 1227 / KCTC 32145 / OM5) (Oligotropha carboxidovorans), this protein is ATP synthase subunit b 1.